The following is a 216-amino-acid chain: UDP-N-acetylglucosamine transferase subunit ALG14 (216 aa).

Over 1-3 (MVC) the chain is Lumenal. A helical membrane pass occupies residues 4–24 (VLVLAAAAGAVAVFLILRIWV). Topologically, residues 25–216 (VLRSMDVTPR…PKSVYLGRIV (192 aa)) are cytoplasmic.

It belongs to the ALG14 family. Forms with ALG13 the active heterodimeric UDP-N-acetylglucosamine transferase complex.

It is found in the endoplasmic reticulum membrane. Its function is as follows. Part of the UDP-N-acetylglucosamine transferase complex that operates in the biosynthetic pathway of dolichol-linked oligosaccharides, the glycan precursors employed in protein asparagine (N)-glycosylation. The assembly of dolichol-linked oligosaccharides begins on the cytosolic side of the endoplasmic reticulum membrane and finishes in its lumen. The sequential addition of sugars to dolichol pyrophosphate produces dolichol-linked oligosaccharides containing fourteen sugars, including two GlcNAcs, nine mannoses and three glucoses. Once assembled, the oligosaccharides are transferred from the lipid to nascent proteins by oligosaccharyltransferases. Functions as a protein-membrane adapter recruiting ALG13 at the cytoplasmic face of the endoplasmic reticulum, where the complex catalyzes the second step of dolichol pyrophosphate biosynthesis, transferring a beta1,4-linked N-acetylglucosamine (GlcNAc) from UDP-GlcNAc to GlcNAc-pyrophosphatedolichol (Gn-PDol) to produce N,N'-diacetylchitobiosyl diphosphodolichol. N,N'-diacetylchitobiosyl diphosphodolichol is a substrate for ALG1, the following enzyme in the biosynthetic pathway. This Homo sapiens (Human) protein is UDP-N-acetylglucosamine transferase subunit ALG14.